Reading from the N-terminus, the 212-residue chain is ER lumen protein-retaining receptor 1-A (212 aa).

Over 1-4 the chain is Lumenal; the sequence is MNIF. The helical transmembrane segment at 5-24 threads the bilayer; it reads RFLGDISHLSAIFILLLKIW. Residues 25–32 are Cytoplasmic-facing; the sequence is KSRSCAGI. A helical transmembrane segment spans residues 33–52; sequence SGKSQLLFAIVFTARYLDLF. An interaction with the K-D-E-L motif on target proteins region spans residues 47–48; it reads RY. Over 53-58 the chain is Lumenal; it reads TNYISF. A helical membrane pass occupies residues 59 to 79; that stretch reads YNTSMKVVYVASSYATVWMIY. Residues 80-92 lie on the Cytoplasmic side of the membrane; sequence SKFKATYDGNHDT. A helical membrane pass occupies residues 93-110; that stretch reads FRVEFLIVPTAILAFLVN. Residues 111 to 116 lie on the Lumenal side of the membrane; that stretch reads HDFTPL. The chain crosses the membrane as a helical span at residues 117–135; that stretch reads EIFWTFSIYLESVAILPQL. Residues 136–149 are Cytoplasmic-facing; sequence FMVSKTGEAETITS. Residues 150-168 traverse the membrane as a helical segment; sequence HYLFALGIYRTLYLFNWIW. An interaction with the K-D-E-L motif on target proteins region spans residues 159–169; sequence RTLYLFNWIWR. Over 169 to 178 the chain is Lumenal; that stretch reads RYQFEGFFDL. The chain crosses the membrane as a helical span at residues 179–199; it reads IAIVAGLVQTVLYCDFFYLYV. Over 200 to 212 the chain is Cytoplasmic; it reads TKVLKGKKLSLPA. An important for recycling of cargo proteins with the sequence motif K-D-E-L from the Golgi to the endoplasmic reticulum region spans residues 204-207; the sequence is KGKK.

Belongs to the ERD2 family.

It is found in the golgi apparatus membrane. It localises to the cytoplasmic vesicle. Its subcellular location is the COPI-coated vesicle membrane. The protein localises to the endoplasmic reticulum membrane. The protein resides in the endoplasmic reticulum-Golgi intermediate compartment membrane. Receptor for the C-terminal sequence motif K-D-E-L that is present on endoplasmic reticulum resident proteins and that mediates their recycling from the Golgi back to the endoplasmic reticulum. This chain is ER lumen protein-retaining receptor 1-A (kdelr1-a), found in Xenopus laevis (African clawed frog).